Consider the following 403-residue polypeptide: MTEKTYTLEEQLALIQRGAQEILSEEDLVKKLKLNRPLRIKAGFDPTAPDLHLGHTVLINKLKHFQDLGHEIYFLIGDYTAKIGDPSGKNSTRPPLTDEQIKANAETYAEQVFKILDKEKTRVVFNSEWFNDMSAADMIQLASHQTVSRMLERDDFSKRYASQTPIAIHEFLYPLVQGYDSIALKADVELGGTDQTFNLLMGRTLQGRYGQEQQVCITVPILEGLDGVNKMSKSLNNYVGIYDAPGTMYQKLLSMPDTLIRRYFEFLSFKPMEEVENLMAEMEDGRNPQEIKRILAEELIERFHDADAAANAHKSAGNVLADGELPVDLPEVTLELEGQDALFITQILNQAALAKNSSSAKDMIKRGAVKVDGEVVDAGFSLTAGQTVVIQAGKKAYAKVTVD.

The short motif at Pro46–His55 is the 'HIGH' region element. The 'KMSKS' region signature appears at Lys230–Ser234. Residue Lys233 coordinates ATP. Residues Leu342–Val402 enclose the S4 RNA-binding domain.

This sequence belongs to the class-I aminoacyl-tRNA synthetase family. TyrS type 2 subfamily. In terms of assembly, homodimer.

The protein localises to the cytoplasm. The enzyme catalyses tRNA(Tyr) + L-tyrosine + ATP = L-tyrosyl-tRNA(Tyr) + AMP + diphosphate + H(+). Its function is as follows. Catalyzes the attachment of tyrosine to tRNA(Tyr) in a two-step reaction: tyrosine is first activated by ATP to form Tyr-AMP and then transferred to the acceptor end of tRNA(Tyr). This is Tyrosine--tRNA ligase from Psychrobacter arcticus (strain DSM 17307 / VKM B-2377 / 273-4).